We begin with the raw amino-acid sequence, 695 residues long: Adhesion G protein-coupled receptor F4 (695 aa).

The N-terminal stretch at 1–21 (MKMKSQATMICCLVFFLSTEC) is a signal peptide. The Extracellular segment spans residues 22–406 (SHYRSKIHLK…TDKVLDYITC (385 aa)). N-linked (GlcNAc...) asparagine glycosylation is found at asparagine 61, asparagine 169, asparagine 177, asparagine 209, asparagine 229, asparagine 250, asparagine 257, asparagine 263, asparagine 264, asparagine 286, asparagine 309, and asparagine 340. The GAIN-B domain occupies 249-397 (HNTSEKSLNF…SILMSSKSMT (149 aa)). 2 cysteine pairs are disulfide-bonded: cysteine 349–cysteine 376 and cysteine 364–cysteine 378. Positions 349 to 397 (CVGWHSKKRRWDEKACQMMLDIRNEVKCRCNYTSVVMSFSILMSSKSMT) are GPS. Asparagine 379 is a glycosylation site (N-linked (GlcNAc...) asparagine). A helical transmembrane segment spans residues 407 to 427 (IGLSVSILSLVLCLIIEATVW). The Cytoplasmic portion of the chain corresponds to 428-440 (SRVVVTEISYMRH). A helical membrane pass occupies residues 441 to 461 (VCIVNIAVSLLTANVWFIIGS). At 462–485 (HFNIKAQDYNMCVAVTFFSHFFYL) the chain is on the extracellular side. Residues 486–506 (SLFFWMLFKALLIIYGILVIF) traverse the membrane as a helical segment. At 507–515 (RRMMKSRMM) the chain is on the cytoplasmic side. A helical membrane pass occupies residues 516–536 (VIGFAIGYGCPLIIAVTTVAI). The Extracellular portion of the chain corresponds to 537-561 (TEPEKGYMRPEACWLNWDNTKALLA). Residues 562 to 582 (FAIPAFVIVAVNLIVVLVVAV) traverse the membrane as a helical segment. Residues 583-606 (NTQRPSIGSSKSQDVVIIMRISKN) are Cytoplasmic-facing. Residues 607 to 627 (VAILTPLLGLTWGFGIATLIE) form a helical membrane-spanning segment. Residues 628-634 (GTSLTFH) lie on the Extracellular side of the membrane. A helical membrane pass occupies residues 635-655 (IIFALLNAFQGFFILLFGTIM). The Cytoplasmic segment spans residues 656 to 695 (DHKIRDALRMRMSSLKGKSRAAENASLGPTNGSKLMNRQG). Residues 674 to 695 (SRAAENASLGPTNGSKLMNRQG) form a disordered region. Residues 682-695 (LGPTNGSKLMNRQG) show a composition bias toward polar residues.

It belongs to the G-protein coupled receptor 2 family. Adhesion G-protein coupled receptor (ADGR) subfamily.

Its subcellular location is the membrane. In terms of biological role, orphan receptor. This chain is Adhesion G protein-coupled receptor F4 (ADGRF4), found in Homo sapiens (Human).